Consider the following 599-residue polypeptide: ATP-binding cassette sub-family E member 1 (599 aa).

4Fe-4S ferredoxin-type domains are found at residues 7 to 37 (RIAIVNHDKCKPKKCRQECKKSCPVVRMGKL) and 46 to 75 (KIAWISETLCIGCGICIKKCPFGALSIVNL). Residue Lys20 forms a Glycyl lysine isopeptide (Lys-Gly) (interchain with G-Cter in ubiquitin) linkage. 2 ABC transporter domains span residues 79–315 (LEKE…FLDG) and 342–562 (VKKM…LSQL). Residues 110–117 (GTNGIGKS) and 379–386 (GENGTGKT) each bind ATP. Position 417 is a phosphoserine (Ser417). Phosphothreonine is present on Thr550.

Belongs to the ABC transporter superfamily. ABCE family. In terms of assembly, (Microbial infection) Interacts with Chandipura virus matrix protein. As to quaternary structure, interacts with PINK1. Interacts with CNOT4. Interacts with PELO. Probably heterodimerizes with RNASEL; this interaction inhibits RNASEL. (Microbial infection) Interacts with HIV-1 proteins Vif and Gag. In terms of assembly, (Microbial infection) Interacts with HIV-2 protein Gag. In terms of processing, ubiquitinated by CNOT4. Ubiquitination mediates the recruitment of autophagy receptors to the mitochondrial outer membrane and initiates mitophagy.

It is found in the cytoplasm. Its subcellular location is the mitochondrion. It carries out the reaction GTP + H2O = GDP + phosphate + H(+). The enzyme catalyses ATP + H2O = ADP + phosphate + H(+). It catalyses the reaction CTP + H2O = CDP + phosphate + H(+). The catalysed reaction is UTP + H2O = UDP + phosphate + H(+). In terms of biological role, nucleoside-triphosphatase (NTPase) involved in ribosome recycling by mediating ribosome disassembly. Able to hydrolyze ATP, GTP, UTP and CTP. Splits ribosomes into free 60S subunits and tRNA- and mRNA-bound 40S subunits. Acts either after canonical termination facilitated by release factors (ETF1/eRF1) or after recognition of stalled and vacant ribosomes by mRNA surveillance factors (PELO/Pelota). Involved in the No-Go Decay (NGD) pathway: recruited to stalled ribosomes by the Pelota-HBS1L complex, and drives the disassembly of stalled ribosomes, followed by degradation of damaged mRNAs as part of the NGD pathway. Also plays a role in quality control of translation of mitochondrial outer membrane-localized mRNA. As part of the PINK1-regulated signaling, ubiquitinated by CNOT4 upon mitochondria damage; this modification generates polyubiquitin signals that recruit autophagy receptors to the mitochondrial outer membrane and initiate mitophagy. RNASEL-specific protein inhibitor which antagonizes the binding of 2-5A (5'-phosphorylated 2',5'-linked oligoadenylates) to RNASEL. Negative regulator of the anti-viral effect of the interferon-regulated 2-5A/RNASEL pathway. Its function is as follows. (Microbial infection) May act as a chaperone for post-translational events during HIV-1 capsid assembly. (Microbial infection) Plays a role in the down-regulation of the 2-5A/RNASEL pathway during encephalomyocarditis virus (EMCV) and HIV-1 infections. In Homo sapiens (Human), this protein is ATP-binding cassette sub-family E member 1 (ABCE1).